The chain runs to 237 residues: Phosphoribosylaminoimidazole-succinocarboxamide synthase (237 aa).

It belongs to the SAICAR synthetase family.

The enzyme catalyses 5-amino-1-(5-phospho-D-ribosyl)imidazole-4-carboxylate + L-aspartate + ATP = (2S)-2-[5-amino-1-(5-phospho-beta-D-ribosyl)imidazole-4-carboxamido]succinate + ADP + phosphate + 2 H(+). The protein operates within purine metabolism; IMP biosynthesis via de novo pathway; 5-amino-1-(5-phospho-D-ribosyl)imidazole-4-carboxamide from 5-amino-1-(5-phospho-D-ribosyl)imidazole-4-carboxylate: step 1/2. The polypeptide is Phosphoribosylaminoimidazole-succinocarboxamide synthase (Serratia proteamaculans (strain 568)).